The sequence spans 276 residues: Lysosome-associated membrane glycoprotein 5 (276 aa).

A signal peptide spans 1 to 27 (MDYRACTSALRMPVLLLLLCTFSCNLA). The Extracellular portion of the chain corresponds to 28–231 (EQEVENLSGL…PTDQRKQLEE (204 aa)). N-linked (GlcNAc...) asparagine glycosylation is found at N33, N51, and N100. A helical transmembrane segment spans residues 232–252 (TLPLILGLTLGVAILIIVAVY). At 253-276 (HIHHKMTANQVQIPRDRSLYKHMG) the chain is on the cytoplasmic side.

The protein belongs to the LAMP family. Post-translationally, glycosylated.

It is found in the cytoplasmic vesicle membrane. Its subcellular location is the cell membrane. The protein localises to the cell projection. The protein resides in the dendrite. It localises to the cytoplasmic vesicle. It is found in the secretory vesicle. Its subcellular location is the synaptic vesicle membrane. The protein localises to the growth cone membrane. The protein resides in the early endosome membrane. It localises to the recycling endosome. It is found in the endoplasmic reticulum-Golgi intermediate compartment membrane. Its subcellular location is the endosome membrane. In terms of biological role, plays a role in short-term synaptic plasticity in a subset of GABAergic neurons in the brain. The polypeptide is Lysosome-associated membrane glycoprotein 5 (lamp5) (Xenopus tropicalis (Western clawed frog)).